Here is a 271-residue protein sequence, read N- to C-terminus: uncharacterized protein (271 aa).

The AB hydrolase-1 domain occupies 24–124 (PIILLVHGGG…QVHVMIPHEP (101 aa)).

The protein belongs to the AB hydrolase superfamily.

This is an uncharacterized protein from Bacillus subtilis (strain 168).